Consider the following 92-residue polypeptide: Small ribosomal subunit protein uS19 (92 aa).

It belongs to the universal ribosomal protein uS19 family.

Its function is as follows. Protein S19 forms a complex with S13 that binds strongly to the 16S ribosomal RNA. In Thermobifida fusca (strain YX), this protein is Small ribosomal subunit protein uS19.